A 501-amino-acid chain; its full sequence is Vitamin D 25-hydroxylase (501 aa).

Position 250 (Ala-250) interacts with substrate. A heme-binding site is contributed by Cys-448.

It belongs to the cytochrome P450 family. In terms of assembly, homodimer. Heme is required as a cofactor. As to expression, highly expressed in the liver and testis.

The protein resides in the endoplasmic reticulum membrane. It is found in the microsome membrane. It catalyses the reaction calciol + reduced [NADPH--hemoprotein reductase] + O2 = calcidiol + oxidized [NADPH--hemoprotein reductase] + H2O + H(+). The catalysed reaction is vitamin D2 + reduced [NADPH--hemoprotein reductase] + O2 = 25-hydroxyvitamin D2 + oxidized [NADPH--hemoprotein reductase] + H2O + H(+). The enzyme catalyses 1alpha-hydroxyvitamin D2 + reduced [NADPH--hemoprotein reductase] + O2 = 1alpha,25-dihydroxyvitamin D2 + oxidized [NADPH--hemoprotein reductase] + H2O + H(+). It carries out the reaction alfacalcidol + reduced [NADPH--hemoprotein reductase] + O2 = calcitriol + oxidized [NADPH--hemoprotein reductase] + H2O + H(+). Its pathway is hormone biosynthesis; vitamin D biosynthesis. In terms of biological role, a cytochrome P450 monooxygenase involved in activation of vitamin D precursors. Catalyzes hydroxylation at C-25 of both forms of vitamin D, vitamin D(2) and D(3) (calciol). Can metabolize vitamin D analogs/prodrugs 1alpha-hydroxyvitamin D(2) (doxercalciferol) and 1alpha-hydroxyvitamin D(3) (alfacalcidol) forming 25-hydroxy derivatives. Mechanistically, uses molecular oxygen inserting one oxygen atom into a substrate, and reducing the second into a water molecule, with two electrons provided by NADPH via cytochrome P450 reductase (CPR; NADPH-ferrihemoprotein reductase). This Mus musculus (Mouse) protein is Vitamin D 25-hydroxylase (Cyp2r1).